A 347-amino-acid polypeptide reads, in one-letter code: Cell shape-determining protein MreB (347 aa).

ATP is bound by residues 19-21 (TAN), 165-167 (GGT), 213-216 (ERIK), and 295-298 (GGAL).

It belongs to the FtsA/MreB family. In terms of assembly, forms polymers in the presence of ATP. Forms pairs of protofilaments that adopt an antiparallel arrangement and bind to lipids.

The protein localises to the cytoplasm. Functionally, forms membrane-associated dynamic filaments that are essential for cell shape determination. Acts by regulating cell wall synthesis and cell elongation, and thus cell shape. A feedback loop between cell geometry and MreB localization may maintain elongated cell shape by targeting cell wall growth to regions of negative cell wall curvature. Required for mid-cell peptidoglycan synthesis and cell division. Directs the localization of the cytosolic peptidoglycan precursor-synthesizing enzyme MurG. Also required for proper chromosome segregation. Directs the segregation of origin-proximal but not origin-distal loci. The sequence is that of Cell shape-determining protein MreB from Caulobacter vibrioides (strain NA1000 / CB15N) (Caulobacter crescentus).